We begin with the raw amino-acid sequence, 285 residues long: Shikimate dehydrogenase (NADP(+)) (285 aa).

Shikimate contacts are provided by residues 20–22 and Ser67; that span reads SIS. Residue Lys71 is the Proton acceptor of the active site. Glu83 is a binding site for NADP(+). 2 residues coordinate shikimate: Asn92 and Asp107. NADP(+) contacts are provided by residues 129-133 and Met227; that span reads GAGGA. Tyr229 lines the shikimate pocket. NADP(+) is bound at residue Gly250.

It belongs to the shikimate dehydrogenase family. Homodimer.

The catalysed reaction is shikimate + NADP(+) = 3-dehydroshikimate + NADPH + H(+). It participates in metabolic intermediate biosynthesis; chorismate biosynthesis; chorismate from D-erythrose 4-phosphate and phosphoenolpyruvate: step 4/7. Involved in the biosynthesis of the chorismate, which leads to the biosynthesis of aromatic amino acids. Catalyzes the reversible NADPH linked reduction of 3-dehydroshikimate (DHSA) to yield shikimate (SA). This chain is Shikimate dehydrogenase (NADP(+)), found in Streptococcus gordonii (strain Challis / ATCC 35105 / BCRC 15272 / CH1 / DL1 / V288).